Consider the following 134-residue polypeptide: Orexigenic neuropeptide QRFP (134 aa).

Residues 1-18 form the signal peptide; sequence MRSPYSLPYLLFLPLGAC. The propeptide occupies 19-88; the sequence is FPVLDTEEPV…RAGFQLRLGR (70 aa). F131 is subject to Phenylalanine amide.

This sequence belongs to the RFamide neuropeptide family. Ligand for the G-protein coupled receptor QRFPR/GPR103. In terms of tissue distribution, expressed in the hypothalamus.

The protein resides in the secreted. In terms of biological role, stimulates feeding behavior, metabolic rate and locomotor activity and increases blood pressure. May have orexigenic activity. May promote aldosterone secretion by the adrenal gland. The protein is Orexigenic neuropeptide QRFP of Bos taurus (Bovine).